The following is a 243-amino-acid chain: Carboxy-S-adenosyl-L-methionine synthase (243 aa).

S-adenosyl-L-methionine contacts are provided by residues tyrosine 40, 65-67 (GCS), 90-91 (DN), 118-119 (DI), asparagine 133, and arginine 200.

Belongs to the class I-like SAM-binding methyltransferase superfamily. Cx-SAM synthase family. Homodimer.

The enzyme catalyses prephenate + S-adenosyl-L-methionine = carboxy-S-adenosyl-L-methionine + 3-phenylpyruvate + H2O. Functionally, catalyzes the conversion of S-adenosyl-L-methionine (SAM) to carboxy-S-adenosyl-L-methionine (Cx-SAM). The sequence is that of Carboxy-S-adenosyl-L-methionine synthase from Shewanella sp. (strain W3-18-1).